We begin with the raw amino-acid sequence, 253 residues long: uncharacterized protein (253 aa).

The signal sequence occupies residues 1–19 (MHYLKKVTIYISLLILVSG). Cys-20 carries the N-palmitoyl cysteine lipid modification. Cys-20 carries S-diacylglycerol cysteine lipidation.

Belongs to the staphylococcal tandem lipoprotein family.

The protein resides in the cell membrane. This is an uncharacterized protein from Staphylococcus epidermidis (strain ATCC 35984 / DSM 28319 / BCRC 17069 / CCUG 31568 / BM 3577 / RP62A).